The following is a 313-amino-acid chain: Cytosolic Fe-S cluster assembly factor NUBP1 homolog (313 aa).

The disordered stretch occupies residues 1–25 (MSDVPDDANAGCPGTGSAGAGKASG). Cysteine 12, cysteine 26, cysteine 29, and cysteine 35 together coordinate [4Fe-4S] cluster. Residue 66 to 73 (GKGGVGKS) coordinates ATP. Residues cysteine 240 and cysteine 243 each contribute to the [4Fe-4S] cluster site.

The protein belongs to the Mrp/NBP35 ATP-binding proteins family. NUBP1/NBP35 subfamily. In terms of assembly, heterotetramer of 2 NUBP1 and 2 NUBP2 chains. It depends on [4Fe-4S] cluster as a cofactor. In terms of tissue distribution, expressed in head amphid and labial ciliated sensory neurons and tail phasmid ciliated chemosensory neurons.

The protein resides in the cytoplasm. It is found in the cell projection. In terms of biological role, component of the cytosolic iron-sulfur (Fe/S) protein assembly (CIA) machinery. Required for maturation of extramitochondrial Fe-S proteins. The NUBP1-NUBP2 heterotetramer forms a Fe-S scaffold complex, mediating the de novo assembly of an Fe-S cluster and its transfer to target apoproteins. Regulates cilium formation and structure. This is Cytosolic Fe-S cluster assembly factor NUBP1 homolog from Caenorhabditis elegans.